The sequence spans 265 residues: Small ribosomal subunit protein uS2 (265 aa).

A disordered region spans residues 226–265 (AAAPNSASVREEEFSADAADEGKGRRAPAKKGDKKADAAE). The span at 245–265 (DEGKGRRAPAKKGDKKADAAE) shows a compositional bias: basic and acidic residues.

Belongs to the universal ribosomal protein uS2 family.

In Xanthomonas axonopodis pv. citri (strain 306), this protein is Small ribosomal subunit protein uS2.